The sequence spans 369 residues: Large ribosomal subunit protein uL4 (369 aa).

An N-acetylthreonine modification is found at Thr-2.

Belongs to the universal ribosomal protein uL4 family.

The chain is Large ribosomal subunit protein uL4 (rpl4) from Dictyostelium discoideum (Social amoeba).